A 382-amino-acid polypeptide reads, in one-letter code: RNA exonuclease 3 (382 aa).

Residues 223 to 369 (VLALDCEMAY…EDAIAAMDVV (147 aa)) form the Exonuclease domain.

Belongs to the REXO1/REXO3 family.

It is found in the cytoplasm. The protein resides in the nucleus. In terms of biological role, 3' to 5' exoribonuclease required for proper 3' end maturation of MRP RNA and of the U5L snRNA. This is RNA exonuclease 3 (REX3) from Eremothecium gossypii (strain ATCC 10895 / CBS 109.51 / FGSC 9923 / NRRL Y-1056) (Yeast).